The following is a 133-amino-acid chain: Ribosome-binding factor A (133 aa).

Belongs to the RbfA family. In terms of assembly, monomer. Binds 30S ribosomal subunits, but not 50S ribosomal subunits or 70S ribosomes.

The protein resides in the cytoplasm. One of several proteins that assist in the late maturation steps of the functional core of the 30S ribosomal subunit. Associates with free 30S ribosomal subunits (but not with 30S subunits that are part of 70S ribosomes or polysomes). Required for efficient processing of 16S rRNA. May interact with the 5'-terminal helix region of 16S rRNA. The polypeptide is Ribosome-binding factor A (Salmonella schwarzengrund (strain CVM19633)).